A 384-amino-acid polypeptide reads, in one-letter code: Probable endopolygalacturonase C (384 aa).

The first 19 residues, 1 to 19, serve as a signal peptide directing secretion; the sequence is MVRQLALACGLLAAVAVQA. Residues 20 to 40 constitute a propeptide that is removed on maturation; that stretch reads APAEPAHPMVTEAPDASLLHK. A disulfide bridge links Cys45 with Cys63. PbH1 repeat units follow at residues 176–207 and 208–229; these read ATDL…DIGE and STDI…AINS. The Proton donor role is filled by Asp222. A disulfide bridge connects residues Cys224 and Cys240. His244 is an active-site residue. PbH1 repeat units lie at residues 254 to 280 and 288 to 310; these read RDDN…RIKA and ISDI…VIEQ. N-linked (GlcNAc...) asparagine glycosylation occurs at Asn261. Cystine bridges form between Cys349–Cys354 and Cys373–Cys382.

Belongs to the glycosyl hydrolase 28 family.

The protein resides in the secreted. It catalyses the reaction (1,4-alpha-D-galacturonosyl)n+m + H2O = (1,4-alpha-D-galacturonosyl)n + (1,4-alpha-D-galacturonosyl)m.. Involved in maceration and soft-rotting of plant tissue. Hydrolyzes the 1,4-alpha glycosidic bonds of de-esterified pectate in the smooth region of the plant cell wall. This Aspergillus aculeatus protein is Probable endopolygalacturonase C (pgaC).